Reading from the N-terminus, the 479-residue chain is Sulfate adenylyltransferase subunit 1 (479 aa).

The region spanning 25–239 is the tr-type G domain; that stretch reads KSLLRFLTCG…EVLETVDIQR (215 aa). The segment at 34-41 is G1; that stretch reads GSVDDGKS. 34 to 41 provides a ligand contact to GTP; it reads GSVDDGKS. A G2 region spans residues 92–96; it reads GITID. Residues 113–116 form a G3 region; that stretch reads DTPG. Residues 113-117 and 168-171 each bind GTP; these read DTPGH and NKMD. The interval 168 to 171 is G4; the sequence is NKMD. Residues 206-208 form a G5 region; sequence SAL.

The protein belongs to the TRAFAC class translation factor GTPase superfamily. Classic translation factor GTPase family. CysN/NodQ subfamily. As to quaternary structure, heterodimer composed of CysD, the smaller subunit, and CysN.

It catalyses the reaction sulfate + ATP + H(+) = adenosine 5'-phosphosulfate + diphosphate. Its pathway is sulfur metabolism; hydrogen sulfide biosynthesis; sulfite from sulfate: step 1/3. With CysD forms the ATP sulfurylase (ATPS) that catalyzes the adenylation of sulfate producing adenosine 5'-phosphosulfate (APS) and diphosphate, the first enzymatic step in sulfur assimilation pathway. APS synthesis involves the formation of a high-energy phosphoric-sulfuric acid anhydride bond driven by GTP hydrolysis by CysN coupled to ATP hydrolysis by CysD. The chain is Sulfate adenylyltransferase subunit 1 from Salmonella paratyphi A (strain ATCC 9150 / SARB42).